The following is a 468-amino-acid chain: MRLPREIGPIHFVGIGGIGMSGIAEVLCNLGYTVQGSDASESANVSRLREKGIQIHVGHKADNVAGADVLVVSTAIKRDNPELLAARAQRIPVVRRAEMLAELMRLKSCVAIAGTHGKTTTTSMVAALLDAGDFDPTVINGGIINAYGTNARLGAGDWMVVEADESDGTFLKLPADVAIVTNVDPEHLDHFKTFDAVQDAFRNFVENVPFYGFAVMCIDHPVVQALVGKIEDRRIITYGENPQADARLLELKPSGSGSTFKVAFRDRKAGTAHEIAELMLPMPGRHNALNATAAIAVAHELGLSDDTIRKALAAFGGVRRRFTKTGDWNGVTIIDDYGHHPVEIAAVLKAARQSTDGRVIAVVQPHRFTRLQSLFEEFCTCFNDADSVIVADVYPAGEAPIQGIDRDHFVLGLRAHGHRNVIPLQDSASLAGVVAGVAKSGDYVVCLGAGNITQWAYALPGELKALGG.

114–120 (GTHGKTT) lines the ATP pocket.

This sequence belongs to the MurCDEF family.

Its subcellular location is the cytoplasm. It catalyses the reaction UDP-N-acetyl-alpha-D-muramate + L-alanine + ATP = UDP-N-acetyl-alpha-D-muramoyl-L-alanine + ADP + phosphate + H(+). The protein operates within cell wall biogenesis; peptidoglycan biosynthesis. Functionally, cell wall formation. This chain is UDP-N-acetylmuramate--L-alanine ligase, found in Rhodopseudomonas palustris (strain HaA2).